The chain runs to 68 residues: Frenatin-3 (68 aa).

The N-terminal stretch at 1 to 22 is a signal peptide; it reads MHFLKKSIFLVLFLGLVSLSIC. Positions 23–46 are excised as a propeptide; that stretch reads EKEKREDQNEEEVDENEEESEEKR. The interval 26–47 is disordered; it reads KREDQNEEEVDENEEESEEKRG. Residues 30 to 42 are compositionally biased toward acidic residues; the sequence is QNEEEVDENEEES.

It belongs to the frog skin active peptide (FSAP) family. Frenatin subfamily. In terms of tissue distribution, expressed by the granular skin glands.

The protein resides in the secreted. Functionally, antimicrobial peptide with activity against both Gram-positive and Gram-negative bacteria. Antibacterial activities have been tested against Bacillus cereus (MIC=12.5 ug/ml), Escherichia coli (MIC=50 ug/ml), Leuconostoc mesenteroides (MIC=25 ug/ml), Micrococcus luteus (MIC=1.5 ug/ml), Pastewella haemolytica (MIC=0.8 ug/ml), Staphylococcus aureus (MIC&lt;l00 ug/ml), Streptococcus faecalis (MIC&lt;150 ug/ml) and Streptococcus uberis (MIC=50 ug/ml). Strongly inhibits the formation of NO by neuronal nitric oxide synthase (nNOS) at micromolar concentrations. Acts by a non-competitive mechanism, probably by binding to calcium/calmodulin and as a consequence blocking calmodulin attachment to nNOS. This chain is Frenatin-3, found in Nyctimystes infrafrenatus (White-lipped tree frog).